A 490-amino-acid chain; its full sequence is Cytochrome P450 71A21 (490 aa).

A helical membrane pass occupies residues 1–21 (MESMTMIILQSLIIFITILFF). A heme-binding site is contributed by C432.

Belongs to the cytochrome P450 family. The cofactor is heme.

It is found in the membrane. This Arabidopsis thaliana (Mouse-ear cress) protein is Cytochrome P450 71A21 (CYP71A21).